Here is a 571-residue protein sequence, read N- to C-terminus: Putative fatty-acid--CoA ligase fadD11 (571 aa).

Residues 1 to 19 are compositionally biased toward low complexity; it reads MARLRGAGAAGRCRPGRFG. Disordered regions lie at residues 1–35 and 67–91; these read MARL…EPDR and RQRG…RCAH. Positions 78–91 are enriched in basic residues; that stretch reads ATVRRSRSRQRCAH. 2 helical membrane-spanning segments follow: residues 314–334 and 431–451; these read TLAF…MSEL and ANIE…MAIG.

Belongs to the ATP-dependent AMP-binding enzyme family.

Its subcellular location is the cell membrane. This is Putative fatty-acid--CoA ligase fadD11 (fadD11) from Mycobacterium tuberculosis (strain CDC 1551 / Oshkosh).